A 447-amino-acid polypeptide reads, in one-letter code: Phosphoglucosamine mutase (447 aa).

The active-site Phosphoserine intermediate is serine 102. Mg(2+) is bound by residues serine 102, aspartate 241, aspartate 243, and aspartate 245. Serine 102 carries the phosphoserine modification.

This sequence belongs to the phosphohexose mutase family. It depends on Mg(2+) as a cofactor. In terms of processing, activated by phosphorylation.

The enzyme catalyses alpha-D-glucosamine 1-phosphate = D-glucosamine 6-phosphate. Its function is as follows. Catalyzes the conversion of glucosamine-6-phosphate to glucosamine-1-phosphate. The protein is Phosphoglucosamine mutase of Pseudoalteromonas atlantica (strain T6c / ATCC BAA-1087).